A 359-amino-acid polypeptide reads, in one-letter code: Stearoyl-CoA desaturase (359 aa).

Over 1-72 the chain is Cytoplasmic; it reads MPAHLLQDDI…EGPSPKVEYV (72 aa). The chain crosses the membrane as a helical span at residues 73–93; sequence WRNIILMSLLHLGALYGITLI. Residue N75 coordinates substrate. The Lumenal portion of the chain corresponds to 94–97; it reads PTCK. A helical transmembrane segment spans residues 98-118; it reads FYTWLWGVFYYFVSALGITAG. Residues 119-217 are Cytoplasmic-facing; sequence AHRLWSHRSY…EKLVMFQRRY (99 aa). The Fe cation site is built by H120 and H125. The Histidine box-1 motif lies at 120–125; sequence HRLWSH. N148, R155, and D156 together coordinate substrate. The Fe cation site is built by H157, H160, and H161. Positions 157–161 match the Histidine box-2 motif; sequence HRAHH. The substrate site is built by R188 and K189. A phosphoserine mark is found at S198 and S203. The helical transmembrane segment at 218 to 237 threads the bilayer; sequence YKPGLLMMCFILPTLVPWYF. The Lumenal portion of the chain corresponds to 238-241; that stretch reads WGET. A helical membrane pass occupies residues 242 to 263; that stretch reads FQNSVFVATFLRYAVVLNATWL. W262 provides a ligand contact to substrate. The Cytoplasmic portion of the chain corresponds to 264 to 359; the sequence is VNSAAHLFGY…RTGDGNYKSG (96 aa). Fe cation-binding residues include H269, H298, H301, and H302. Positions 298-302 match the Histidine box-3 motif; sequence HNYHH.

It belongs to the fatty acid desaturase type 1 family. In terms of assembly, may self-associate and form homodimers. Fe(2+) serves as cofactor. As to expression, detected in fetal liver, lung and brain. Highly expressed in adult adipose tissue, and at lower levels in adult brain and lung.

It localises to the endoplasmic reticulum membrane. It catalyses the reaction octadecanoyl-CoA + 2 Fe(II)-[cytochrome b5] + O2 + 2 H(+) = (9Z)-octadecenoyl-CoA + 2 Fe(III)-[cytochrome b5] + 2 H2O. The enzyme catalyses hexadecanoyl-CoA + 2 Fe(II)-[cytochrome b5] + O2 + 2 H(+) = (9Z)-hexadecenoyl-CoA + 2 Fe(III)-[cytochrome b5] + 2 H2O. Functionally, stearoyl-CoA desaturase that utilizes O(2) and electrons from reduced cytochrome b5 to introduce the first double bond into saturated fatty acyl-CoA substrates. Catalyzes the insertion of a cis double bond at the delta-9 position into fatty acyl-CoA substrates including palmitoyl-CoA and stearoyl-CoA. Gives rise to a mixture of 16:1 and 18:1 unsaturated fatty acids. Plays an important role in lipid biosynthesis. Plays an important role in regulating the expression of genes that are involved in lipogenesis and in regulating mitochondrial fatty acid oxidation. Plays an important role in body energy homeostasis. Contributes to the biosynthesis of membrane phospholipids, cholesterol esters and triglycerides. This is Stearoyl-CoA desaturase (SCD) from Homo sapiens (Human).